A 186-amino-acid polypeptide reads, in one-letter code: Ribosome-recycling factor (186 aa).

Belongs to the RRF family.

The protein localises to the cytoplasm. Its function is as follows. Responsible for the release of ribosomes from messenger RNA at the termination of protein biosynthesis. May increase the efficiency of translation by recycling ribosomes from one round of translation to another. The protein is Ribosome-recycling factor of Bartonella tribocorum (strain CIP 105476 / IBS 506).